We begin with the raw amino-acid sequence, 160 residues long: Major strawberry allergen Fra a 1.04 (160 aa).

The protein belongs to the BetVI family. In terms of processing, phosphorylated in vivo. Phosphorylation prevents its activity as ribonuclease. In terms of tissue distribution, highly expressed in roots. Expressed a low levels in ripe red fruits.

In terms of biological role, possesses ribonuclease activity in vitro. The protein is Major strawberry allergen Fra a 1.04 of Fragaria ananassa (Strawberry).